Consider the following 317-residue polypeptide: Beta-ketoacyl-[acyl-carrier-protein] synthase III (317 aa).

Active-site residues include Cys-112 and His-244. Residues 245–249 form an ACP-binding region; sequence QANLR. Asn-274 is a catalytic residue.

Belongs to the thiolase-like superfamily. FabH family. Homodimer.

It is found in the cytoplasm. It catalyses the reaction malonyl-[ACP] + acetyl-CoA + H(+) = 3-oxobutanoyl-[ACP] + CO2 + CoA. It participates in lipid metabolism; fatty acid biosynthesis. Catalyzes the condensation reaction of fatty acid synthesis by the addition to an acyl acceptor of two carbons from malonyl-ACP. Catalyzes the first condensation reaction which initiates fatty acid synthesis and may therefore play a role in governing the total rate of fatty acid production. Possesses both acetoacetyl-ACP synthase and acetyl transacylase activities. Its substrate specificity determines the biosynthesis of branched-chain and/or straight-chain of fatty acids. This is Beta-ketoacyl-[acyl-carrier-protein] synthase III from Pectobacterium atrosepticum (strain SCRI 1043 / ATCC BAA-672) (Erwinia carotovora subsp. atroseptica).